A 172-amino-acid polypeptide reads, in one-letter code: Putative phosphoesterase BT9727_1129 (172 aa).

The Proton donor role is filled by H34. 2 short sequence motifs (HXTX) span residues 34-37 (HITL) and 115-118 (HLTI). The active-site Proton acceptor is H115.

This sequence belongs to the 2H phosphoesterase superfamily. YjcG family.

This is Putative phosphoesterase BT9727_1129 from Bacillus thuringiensis subsp. konkukian (strain 97-27).